Consider the following 592-residue polypeptide: 2-succinyl-5-enolpyruvyl-6-hydroxy-3-cyclohexene-1-carboxylate synthase (592 aa).

This sequence belongs to the TPP enzyme family. MenD subfamily. As to quaternary structure, homodimer. The cofactor is Mg(2+). Requires Mn(2+) as cofactor. It depends on thiamine diphosphate as a cofactor.

The catalysed reaction is isochorismate + 2-oxoglutarate + H(+) = 5-enolpyruvoyl-6-hydroxy-2-succinyl-cyclohex-3-ene-1-carboxylate + CO2. Its pathway is quinol/quinone metabolism; 1,4-dihydroxy-2-naphthoate biosynthesis; 1,4-dihydroxy-2-naphthoate from chorismate: step 2/7. It participates in quinol/quinone metabolism; menaquinone biosynthesis. In terms of biological role, catalyzes the thiamine diphosphate-dependent decarboxylation of 2-oxoglutarate and the subsequent addition of the resulting succinic semialdehyde-thiamine pyrophosphate anion to isochorismate to yield 2-succinyl-5-enolpyruvyl-6-hydroxy-3-cyclohexene-1-carboxylate (SEPHCHC). This is 2-succinyl-5-enolpyruvyl-6-hydroxy-3-cyclohexene-1-carboxylate synthase from Haloarcula marismortui (strain ATCC 43049 / DSM 3752 / JCM 8966 / VKM B-1809) (Halobacterium marismortui).